The primary structure comprises 607 residues: uncharacterized protein (607 aa).

2 disordered regions span residues 28-114 (GAER…KLRR) and 142-188 (DQER…NNSS). The segment covering 35–50 (SSHGSINSRSASPNKA) has biased composition (polar residues). Basic and acidic residues-rich tracts occupy residues 90-102 (VNGE…DHDT) and 161-174 (KENK…KDLS). Residues 177-188 (SSSSMKKANNSS) show a composition bias toward low complexity. 2 consecutive PHD-type zinc fingers follow at residues 263–312 (NDYC…CKHH) and 406–459 (PILC…HSDH).

This is an uncharacterized protein from Schizosaccharomyces pombe (strain 972 / ATCC 24843) (Fission yeast).